Reading from the N-terminus, the 304-residue chain is D-alanine--D-alanine ligase (304 aa).

The ATP-grasp domain occupies 103-299; sequence KLIWQALGLP…FADLCIEILK (197 aa). ATP is bound at residue 129 to 184; the sequence is EEKLGLPMFVKPAAEGSSVGVVKVKGKGRLKSVYEELKHLQGEIIAERFIGGGEYS. The Mg(2+) site is built by aspartate 253, glutamate 266, and asparagine 268.

It belongs to the D-alanine--D-alanine ligase family. Requires Mg(2+) as cofactor. It depends on Mn(2+) as a cofactor.

It localises to the cytoplasm. It catalyses the reaction 2 D-alanine + ATP = D-alanyl-D-alanine + ADP + phosphate + H(+). It participates in cell wall biogenesis; peptidoglycan biosynthesis. Cell wall formation. The protein is D-alanine--D-alanine ligase of Neisseria meningitidis serogroup B (strain ATCC BAA-335 / MC58).